The sequence spans 677 residues: Polyunsaturated fatty acid lipoxygenase ALOX8 (677 aa).

Residues 2–125 form the PLAT domain; it reads AKCRVRVSTG…ELVLREGAAK (124 aa). Ca(2+) contacts are provided by glycine 15, glycine 17, aspartate 39, histidine 40, glycine 42, glutamate 44, aspartate 86, and alanine 87. The Lipoxygenase domain maps to 126 to 677; sequence VSWQDHHPTL…PPLIENSVSI (552 aa). Positions 374, 379, 554, and 677 each coordinate Fe cation.

It belongs to the lipoxygenase family. Fe cation is required as a cofactor. As to expression, expressed in epidermis and brain. No expression found in heart, spleen, liver, skeletal muscle, kidney or testis.

The protein localises to the cytoplasm. It is found in the cytosol. Its subcellular location is the membrane. The catalysed reaction is (9Z,12Z)-octadecadienoate + O2 = (9S)-hydroperoxy-(10E,12Z)-octadecadienoate. It carries out the reaction (5Z,8Z,11Z,14Z)-eicosatetraenoate + O2 = (8S)-hydroperoxy-(5Z,9E,11Z,14Z)-eicosatetraenoate. The enzyme catalyses (15S)-hydroperoxy-(5Z,8Z,11Z,13E)-eicosatetraenoate + O2 = (8S,15S)-dihydroperoxy-(5Z,9E,11Z,13E)-eicosatetraenoate. It catalyses the reaction (8S)-hydroperoxy-(5Z,9E,11Z,14Z)-eicosatetraenoate + O2 = (8S,15S)-dihydroperoxy-(5Z,9E,11Z,13E)-eicosatetraenoate. The catalysed reaction is 1-octadecanoyl-2-(5Z,8Z,11Z,14Z-eicosatetraenoyl)-sn-glycero-3-phosphocholine + O2 = 1-octadecanoyl-2-(15-hydroperoxy-5Z,8Z,11Z,13E-eicosatetraenoyl)-sn-glycero-3-phosphocholine. It carries out the reaction a 1-acyl-2-(5Z,8Z,11Z,14Z-eicosatetraenoyl)-sn-glycero-3-phospho-(1D-myo-inositol) + O2 = a 1-acyl-2-(15-hydroperoxy-5Z,8Z,11Z,13E-eicosatetraenoyl)-sn-glycero-3-phospho-(1D-myo-inositol). The enzyme catalyses a 1-acyl-2-(8Z,11Z,14Z-eicosatrienoyl)-sn-glycero-3-phospho-(1D-myo-inositol) + O2 = a 1-acyl-2-(15-hydroperoxy-8Z,11Z,13E-eicosatrienoyl)-sn-glycero-3-phospho-(1D-myo-inositol). It catalyses the reaction (5Z,8Z,11Z,14Z)-eicosatetraenoate + O2 = 9-hydroperoxy-(5Z,7E,11Z,14Z)-eicosatetraenoate. The catalysed reaction is (5Z,8Z,11Z,14Z)-eicosatetraenoate + O2 = 11-hydroperoxy-(5Z,8Z,12E,14Z)-eicosatetraenoate. It carries out the reaction (8Z,11Z,14Z)-eicosatrienoate + O2 = 15-hydroperoxy-(8Z,11Z,13E)-eicosatrienoate. It functions in the pathway lipid metabolism; hydroperoxy eicosatetraenoic acid biosynthesis. Its function is as follows. Non-heme iron-containing dioxygenase that catalyzes the stereo-specific peroxidation of free and esterified polyunsaturated fatty acids generating a spectrum of bioactive lipid mediators. Catalyzes the peroxidation of arachidonate and linoleate into (8S)-HPETE and (9S)-HPODE respectively. In addition to generate (8S)-HPETE from free arachidonic acid (AA), may produce other HETE isomers from phospholipid-esterified polyunsaturated fatty acids and minor products derived from (8S)-HPETE itself that may include leukotriene A4 and 8,15-diHPETE. With free arachidonate as substrate, has no detectable 15S-lipoxygenase activity and only displays a 8S-lipoxygenase activity. However may have a 15S-lipoxygenase activity with (8S)-HPETE to produce (8S,15S)-diHPETE and when oxidizes directly arachidonic acid esterified to membrane-bound phospholipids to produce a phospholipid-esterified 15-HpETE. May also catalyze (15S)-HPETE peroxidation to produce 8,15-diHPETE. May play a role in keratinocyte differentiation through activation of the peroxisome proliferator activated receptor signaling pathway. This Mus musculus (Mouse) protein is Polyunsaturated fatty acid lipoxygenase ALOX8.